The chain runs to 132 residues: Small ribosomal subunit protein uS8 (132 aa).

It belongs to the universal ribosomal protein uS8 family. Part of the 30S ribosomal subunit. Contacts proteins S5 and S12.

In terms of biological role, one of the primary rRNA binding proteins, it binds directly to 16S rRNA central domain where it helps coordinate assembly of the platform of the 30S subunit. This chain is Small ribosomal subunit protein uS8, found in Brevibacillus brevis (strain 47 / JCM 6285 / NBRC 100599).